Reading from the N-terminus, the 102-residue chain is MNGQNIRIRLKAFDHRILDASTREIVSTAKRTGASVRGPVPLPTRIEKFTVNRSPHVDKKSREQFEMRTHKRLLDIVDPTPQTVDALMKLDLAAGVDVEIKL.

This sequence belongs to the universal ribosomal protein uS10 family. As to quaternary structure, part of the 30S ribosomal subunit.

Functionally, involved in the binding of tRNA to the ribosomes. The protein is Small ribosomal subunit protein uS10 of Rhizobium meliloti (strain 1021) (Ensifer meliloti).